A 128-amino-acid polypeptide reads, in one-letter code: Large ribosomal subunit protein uL22 (128 aa).

Residues 1-20 (MANGHRSQIKRERNAVKDTR) are disordered. Positions 9-20 (IKRERNAVKDTR) are enriched in basic and acidic residues.

This sequence belongs to the universal ribosomal protein uL22 family. As to quaternary structure, part of the 50S ribosomal subunit.

Its function is as follows. This protein binds specifically to 23S rRNA; its binding is stimulated by other ribosomal proteins, e.g. L4, L17, and L20. It is important during the early stages of 50S assembly. It makes multiple contacts with different domains of the 23S rRNA in the assembled 50S subunit and ribosome. Functionally, the globular domain of the protein is located near the polypeptide exit tunnel on the outside of the subunit, while an extended beta-hairpin is found that lines the wall of the exit tunnel in the center of the 70S ribosome. This chain is Large ribosomal subunit protein uL22, found in Lachnospira eligens (strain ATCC 27750 / DSM 3376 / VPI C15-48 / C15-B4) (Eubacterium eligens).